The chain runs to 84 residues: Cytoplasmic envelopment protein 3 (84 aa).

G2 is lipidated: N-myristoyl glycine; by host. Positions 40 to 46 are asp/Glu-rich (acidic); that stretch reads DLDDLRC.

It belongs to the herpesviridae cytoplasmic envelopment protein 3 family. As to quaternary structure, interacts with cytoplasmic envelopment protein 2; this interaction is essential for the proper localization of each protein to the assembly complex and thus for the production of infectious virus. Myristoylation and palmitoylation (probably on one or more of the nearby cysteines at the N-terminus) enable membrane-binding and Golgi apparatus-specific targeting and are essential for efficient packaging. Post-translationally, phosphorylated. Phosphorylation does not seem to be required for recycling to the host Golgi apparatus. Packaging is selective for underphosphorylated forms.

The protein localises to the virion tegument. It is found in the virion membrane. Its subcellular location is the host cell membrane. The protein resides in the host Golgi apparatus membrane. Functionally, plays an important role in the cytoplasmic envelopment of tegument proteins and capsids during the assembly and egress processes. Also participates in viral entry at the fusion step probably by regulating the core fusion machinery. In Gallus gallus (Chicken), this protein is Cytoplasmic envelopment protein 3 (MDV023).